The primary structure comprises 248 residues: MEDTVIVGRHAVREAIITGHPINKILIQEGIKKQQINEILKNAKDQKIIVQTVPKSKLDFLANAPHQGVAALIAPYEYADFDQFLKQQKEKEGLSTVLILDGLEDPHNLGSILRTADATGVDGVIIPKRRSVTLTQTVAKASTGAIEHVPVIRVTNLAKTIDELKDNGFWVAGTEANNATDYRNLEADMSLAIVIGSEGQGMSRLVSDKCDFYIKIPMVGHVNSLNASVAASLMMYEVFRKRHDVGEI.

G196, I216, and L225 together coordinate S-adenosyl-L-methionine.

The protein belongs to the class IV-like SAM-binding methyltransferase superfamily. RNA methyltransferase TrmH family.

In Staphylococcus aureus (strain Mu50 / ATCC 700699), this protein is Putative TrmH family tRNA/rRNA methyltransferase.